A 218-amino-acid chain; its full sequence is Small ribosomal subunit protein uS3c (218 aa).

Residues 47 to 118 (VQKNMKTSSG…KLNIAITRIE (72 aa)) enclose the KH type-2 domain.

It belongs to the universal ribosomal protein uS3 family. As to quaternary structure, part of the 30S ribosomal subunit.

The protein localises to the plastid. Its subcellular location is the chloroplast. The sequence is that of Small ribosomal subunit protein uS3c (rps3) from Lactuca sativa (Garden lettuce).